Here is a 334-residue protein sequence, read N- to C-terminus: Leucine-rich repeat-containing protein 39 (334 aa).

The stretch at 10-47 (AVNAVKEVWEKRIKKLNEDLKREKEFQQKLVRIWEERV) forms a coiled coil. LRR repeat units lie at residues 84-105 (QLQE…IGRF), 107-128 (NLIV…IGLL), 130-151 (RLQE…LSYC), 153-176 (SLEK…SNLL), 177-198 (KLTH…VLNM), 200-221 (ALEW…IERM), 223-244 (NLHT…ISSM), 246-267 (NLST…MEKM), and 269-290 (NLRF…PPSE).

Interacts with MYH7 (via C-terminus).

The protein localises to the cytoplasm. Its subcellular location is the myofibril. It is found in the sarcomere. The protein resides in the m line. Its function is as follows. Component of the sarcomeric M-band which plays a role in myocyte response to biomechanical stress. May regulate expression of other M-band proteins via an SRF-dependent pathway. Important for normal contractile function in heart. The sequence is that of Leucine-rich repeat-containing protein 39 from Bos taurus (Bovine).